A 204-amino-acid polypeptide reads, in one-letter code: Urease accessory protein UreG (204 aa).

10–17 lines the GTP pocket; sequence GPVGAGKT.

It belongs to the SIMIBI class G3E GTPase family. UreG subfamily. In terms of assembly, homodimer. UreD, UreF and UreG form a complex that acts as a GTP-hydrolysis-dependent molecular chaperone, activating the urease apoprotein by helping to assemble the nickel containing metallocenter of UreC. The UreE protein probably delivers the nickel.

The protein resides in the cytoplasm. Its function is as follows. Facilitates the functional incorporation of the urease nickel metallocenter. This process requires GTP hydrolysis, probably effectuated by UreG. The chain is Urease accessory protein UreG from Bacillus sp. (strain TB-90).